We begin with the raw amino-acid sequence, 836 residues long: Protein AKNAD1 (836 aa).

Polar residues-rich tracts occupy residues 159-172, 181-192, and 227-248; these read SWPK…TDQL, SNKPGSATTTEE, and SYQG…NTFK. Disordered regions lie at residues 159–248 and 303–325; these read SWPK…NTFK and LETT…KITE. A compositionally biased stretch (basic and acidic residues) spans 311-323; it reads CVEKQHQEQKGKI. A coiled-coil region spans residues 372–484; it reads QKISQGKQMC…DVKEKMDESK (113 aa). Disordered regions lie at residues 510–545 and 575–596; these read SNEI…EAPN and MRLS…DCAE.

The protein belongs to the AKNA family.

In Homo sapiens (Human), this protein is Protein AKNAD1 (AKNAD1).